The chain runs to 262 residues: tRNA (guanine-N(1)-)-methyltransferase (262 aa).

S-adenosyl-L-methionine-binding positions include Gly-113 and 137 to 142 (IGDYVL).

This sequence belongs to the RNA methyltransferase TrmD family. Homodimer.

The protein resides in the cytoplasm. The catalysed reaction is guanosine(37) in tRNA + S-adenosyl-L-methionine = N(1)-methylguanosine(37) in tRNA + S-adenosyl-L-homocysteine + H(+). Its function is as follows. Specifically methylates guanosine-37 in various tRNAs. The chain is tRNA (guanine-N(1)-)-methyltransferase from Saccharopolyspora erythraea (strain ATCC 11635 / DSM 40517 / JCM 4748 / NBRC 13426 / NCIMB 8594 / NRRL 2338).